The following is a 269-amino-acid chain: Mitochondrial S-adenosylmethionine carrier protein (269 aa).

3 Solcar repeats span residues arginine 4–leucine 77, leucine 85–leucine 167, and valine 176–leucine 264. 6 helical membrane passes run glutamate 5–phenylalanine 25, isoleucine 49–valine 69, tyrosine 84–isoleucine 104, arginine 141–tryptophan 161, serine 181–valine 201, and phenylalanine 237–alanine 257.

Belongs to the mitochondrial carrier (TC 2.A.29) family.

It is found in the mitochondrion inner membrane. The catalysed reaction is S-adenosyl-L-homocysteine(out) + S-adenosyl-L-methionine(in) = S-adenosyl-L-homocysteine(in) + S-adenosyl-L-methionine(out). In terms of biological role, mitochondrial S-adenosyl-L-methionine/S-adenosyl-L-homocysteine antiporter. Mediates the exchange of cytosolic S-adenosyl-L-methionine, the predominant methyl-group donor for macromolecule methylation processes, for mitochondrial S-adenosylhomocysteine(SAH), a by-product of methylation reactions. This Xenopus tropicalis (Western clawed frog) protein is Mitochondrial S-adenosylmethionine carrier protein (slc25a26).